Consider the following 465-residue polypeptide: Mitochondrial-processing peptidase subunit beta (465 aa).

A Zn(2+)-binding site is contributed by H79. E82 acts as the Proton acceptor in catalysis. Residues H83 and E159 each contribute to the Zn(2+) site.

This sequence belongs to the peptidase M16 family. As to quaternary structure, heterodimer of an alpha subunit and a beta subunit subunits, forming the mitochondrial processing protease (MPP) in which the alpha subunit is involved in substrate recognition and binding and the beta subunit is the catalytic subunit. Zn(2+) serves as cofactor.

The protein localises to the mitochondrion matrix. The enzyme catalyses Release of N-terminal transit peptides from precursor proteins imported into the mitochondrion, typically with Arg in position P2.. Its activity is regulated as follows. Binding to the alpha subunit is required for catalytic activity. Functionally, catalytic subunit of the essential mitochondrial processing protease (MPP), which cleaves the mitochondrial sequence off newly imported precursors proteins. Preferentially, cleaves after an arginine at position P2. In Blastocladiella emersonii (Aquatic fungus), this protein is Mitochondrial-processing peptidase subunit beta (MPP1).